The following is a 156-amino-acid chain: Small ribosomal subunit protein uS7 (156 aa).

This sequence belongs to the universal ribosomal protein uS7 family. Part of the 30S ribosomal subunit. Contacts proteins S9 and S11.

Functionally, one of the primary rRNA binding proteins, it binds directly to 16S rRNA where it nucleates assembly of the head domain of the 30S subunit. Is located at the subunit interface close to the decoding center, probably blocks exit of the E-site tRNA. In Clostridium botulinum (strain Okra / Type B1), this protein is Small ribosomal subunit protein uS7.